We begin with the raw amino-acid sequence, 124 residues long: Large ribosomal subunit protein bL36m (124 aa).

It belongs to the bacterial ribosomal protein bL36 family. As to quaternary structure, component of the mitochondrial large ribosomal subunit (mt-LSU). Mature N.crassa 74S mitochondrial ribosomes consist of a small (37S) and a large (54S) subunit. The 37S small subunit contains a 16S ribosomal RNA (16S mt-rRNA) and 32 different proteins. The 54S large subunit contains a 23S rRNA (23S mt-rRNA) and 42 different proteins. bL36m has a zinc binding site.

It is found in the mitochondrion. Component of the mitochondrial ribosome (mitoribosome), a dedicated translation machinery responsible for the synthesis of mitochondrial genome-encoded proteins, including at least some of the essential transmembrane subunits of the mitochondrial respiratory chain. The mitoribosomes are attached to the mitochondrial inner membrane and translation products are cotranslationally integrated into the membrane. The sequence is that of Large ribosomal subunit protein bL36m (rtc6) from Neurospora crassa (strain ATCC 24698 / 74-OR23-1A / CBS 708.71 / DSM 1257 / FGSC 987).